Reading from the N-terminus, the 252-residue chain is Cytochrome b6-f complex iron-sulfur subunit, chloroplastic (252 aa).

A helical membrane pass occupies residues 94–114; sequence LVLAAVAPVVASAGGCYLYYF. The Rieske domain maps to 141-235; the sequence is WFKSHKKNAR…VEDDNGKILL (95 aa). [2Fe-2S] cluster contacts are provided by C181, H183, C199, and H202. C186 and C201 are joined by a disulfide.

The protein belongs to the Rieske iron-sulfur protein family. The 4 large subunits of the cytochrome b6-f complex are cytochrome b6, subunit IV (17 kDa polypeptide, petD), cytochrome f and the Rieske protein, while the 4 small subunits are petG, petL, petM and petN. The complex functions as a dimer. It depends on [2Fe-2S] cluster as a cofactor.

It localises to the plastid. The protein resides in the chloroplast thylakoid membrane. It carries out the reaction 2 oxidized [plastocyanin] + a plastoquinol + 2 H(+)(in) = 2 reduced [plastocyanin] + a plastoquinone + 4 H(+)(out). Its function is as follows. Component of the cytochrome b6-f complex, which mediates electron transfer between photosystem II (PSII) and photosystem I (PSI), cyclic electron flow around PSI, and state transitions. This chain is Cytochrome b6-f complex iron-sulfur subunit, chloroplastic (petC), found in Bigelowiella natans (Pedinomonas minutissima).